Consider the following 111-residue polypeptide: Nucleoid-associated protein Teth39_2199 (111 aa).

This sequence belongs to the YbaB/EbfC family. Homodimer.

The protein localises to the cytoplasm. Its subcellular location is the nucleoid. Functionally, binds to DNA and alters its conformation. May be involved in regulation of gene expression, nucleoid organization and DNA protection. The chain is Nucleoid-associated protein Teth39_2199 from Thermoanaerobacter pseudethanolicus (strain ATCC 33223 / 39E) (Clostridium thermohydrosulfuricum).